Consider the following 120-residue polypeptide: Large ribosomal subunit protein uL18 (120 aa).

This sequence belongs to the universal ribosomal protein uL18 family. In terms of assembly, part of the 50S ribosomal subunit; part of the 5S rRNA/L5/L18/L25 subcomplex. Contacts the 5S and 23S rRNAs.

This is one of the proteins that bind and probably mediate the attachment of the 5S RNA into the large ribosomal subunit, where it forms part of the central protuberance. In Brevibacillus brevis (strain 47 / JCM 6285 / NBRC 100599), this protein is Large ribosomal subunit protein uL18.